A 679-amino-acid polypeptide reads, in one-letter code: Patatin-like phospholipase 1 (679 aa).

Disordered regions lie at residues 19-45 and 155-194; these read FSDD…NAEN and GEYE…NYNS. Polar residues-rich tracts occupy residues 35–45 and 162–176; these read YSGSETQNAEN and TSSY…NTVG. Residues 177-188 show a composition bias toward basic and acidic residues; the sequence is SEKEETENKNEE. The PNPLA domain occupies 338–544; the sequence is LSLDGGGILT…KASNPALIAL (207 aa). The GXSXG motif lies at 381 to 385; it reads GTSAG. The active-site Nucleophile is the serine 383. Aspartate 531 (proton acceptor) is an active-site residue. Positions 531-533 match the DGA/G motif; the sequence is DGA.

The protein belongs to the patatin family.

Its subcellular location is the cytoplasm. It carries out the reaction a 1,2-diacyl-sn-glycero-3-phosphocholine + H2O = a 1-acyl-sn-glycero-3-phosphocholine + a fatty acid + H(+). The enzyme catalyses 1,2-dihexadecanoyl-sn-glycero-3-phosphocholine + H2O = 1-hexadecanoyl-sn-glycero-3-phosphocholine + hexadecanoate + H(+). Functionally, hydrolyzes the ester bond of the fatty acyl group attached at the sn-2 position of phospholipids such as phosphatidylcholine. Involved in gametogenesis; however, it is not clear whether it is involved in gametocytes development in host erythrocytes or in gametocyte activation in the mosquito midgut. Involved in gametocyte development in host erythrocytes; however, not involved in gametocytes activation including male gamete exflagellation. Involved in the rounding up of gametocytes following activation in the mosquito midgut; however, not required for gametocyte development in host erythrocytes. Required for exflagellation of activated male gametocytes. Involved in gametocytes egress from host erythrocytes by promoting the relocalization of perforin-like protein PLP2-containing vesicles to the periphery of gametocytes; PLP2 secretion is required for permeabilization of the erythrocyte membrane and thus, promotes gametocyte egress. Dispensable for asexual blood stage development. The protein is Patatin-like phospholipase 1 of Plasmodium falciparum (isolate NF54).